Reading from the N-terminus, the 312-residue chain is Very-long-chain 3-oxoacyl-CoA reductase (312 aa).

A helical transmembrane segment spans residues 4 to 24; it reads ALPAAGFLYWVGASTIAYLTL. 50 to 79 is a binding site for NADP(+); the sequence is GEWAVVTGGTDGIGKSYAEELAKRGMKIVL. The next 2 membrane-spanning stretches (helical) occupy residues 182–202 and 271–291; these read GVIL…LTVY and GYVI…WIYF. Residue Ser189 coordinates substrate. The active-site Proton acceptor is the Tyr202. The short motif at 308 to 312 is the Di-lysine motif element; sequence KTKKN.

This sequence belongs to the short-chain dehydrogenases/reductases (SDR) family. 17-beta-HSD 3 subfamily.

It is found in the endoplasmic reticulum membrane. The catalysed reaction is a very-long-chain (3R)-3-hydroxyacyl-CoA + NADP(+) = a very-long-chain 3-oxoacyl-CoA + NADPH + H(+). It carries out the reaction 17beta-estradiol + NAD(+) = estrone + NADH + H(+). It catalyses the reaction 17beta-estradiol + NADP(+) = estrone + NADPH + H(+). The enzyme catalyses 3-oxooctadecanoyl-CoA + NADPH + H(+) = (3R)-hydroxyoctadecanoyl-CoA + NADP(+). The catalysed reaction is (7Z,10Z,13Z,16Z)-3-oxodocosatetraenoyl-CoA + NADPH + H(+) = (3R)-hydroxy-(7Z,10Z,13Z,16Z)-docosatetraenoyl-CoA + NADP(+). It carries out the reaction 3-oxo-(7Z,10Z,13Z,16Z,19Z)-docosapentaenoyl-CoA + NADPH + H(+) = (3R)-hydroxy-(7Z,10Z,13Z,16Z,19Z)-docosapentaenoyl-CoA + NADP(+). It catalyses the reaction (8Z,11Z,14Z)-3-oxoeicosatrienoyl-CoA + NADPH + H(+) = (3R)-hydroxy-(8Z,11Z,14Z)-eicosatrienoyl-CoA + NADP(+). The protein operates within lipid metabolism; fatty acid biosynthesis. It functions in the pathway steroid biosynthesis; estrogen biosynthesis. Catalyzes the second of the four reactions of the long-chain fatty acids elongation cycle. This endoplasmic reticulum-bound enzymatic process, allows the addition of two carbons to the chain of long- and very long-chain fatty acids/VLCFAs per cycle. This enzyme has a 3-ketoacyl-CoA reductase activity, reducing 3-ketoacyl-CoA to 3-hydroxyacyl-CoA, within each cycle of fatty acid elongation. Thereby, it may participate in the production of VLCFAs of different chain lengths that are involved in multiple biological processes as precursors of membrane lipids and lipid mediators. May also catalyze the transformation of estrone (E1) into estradiol (E2) and play a role in estrogen formation. The sequence is that of Very-long-chain 3-oxoacyl-CoA reductase from Rattus norvegicus (Rat).